Here is a 406-residue protein sequence, read N- to C-terminus: Sorting nexin-6 (406 aa).

N-acetylmethionine is present on M1. At M2 the chain carries N-acetylmethionine; in Sorting nexin-6, N-terminally processed. An interaction with PIM1 region spans residues 2 to 179 (MEGLDDGPDF…NQDLSVRGKN (178 aa)). A PX domain is found at 26 to 173 (LQSDAALQVD…HVFLEYNQDL (148 aa)). A 1,2-diacyl-sn-glycero-3-phospho-(1D-myo-inositol-4,5-bisphosphate) contacts are provided by residues 41–47 (SERDKVK), 100–106 (FDASREK), and 114–117 (EGSM). S116 and S194 each carry phosphoserine. The tract at residues 182–199 (EKLEDFFKNMVKSADGVI) is membrane-binding amphipathic helix. In terms of domain architecture, BAR spans 203 to 406 (VKDVDDFFEH…NCLAVLNGDT (204 aa)).

Belongs to the sorting nexin family. Forms heterodimers with BAR domain-containing sorting nexins SNX1 and SNX2. The heterodimers are proposed to self-assemble into helical arrays on the membrane to stabilize and expand local membrane curvature underlying endosomal tubule formation. Thought to be a component of the originally described retromer complex (also called SNX-BAR retromer) which is a pentamer containing the heterotrimeric retromer cargo-selective complex (CSC), also described as vacuolar protein sorting subcomplex (VPS), and a heterodimeric membrane-deforming subcomplex formed between SNX1 or SNX2 and SNX5 or SNX6 (also called SNX-BAR subcomplex); the respective CSC and SNX-BAR subcomplexes associate with low affinity. Interacts with SNX1, SNX2, VPS26A, VPS29, VPS35, CDKN1B, TGFB receptors, BACE1, BRMS1, PIP5K1C isoform 3. Interacts with DCTN1; the association with DCTN1 is involved in movement of retromer-c ontaining vesicles toward the TGN. Interacts with CDKN1B and GIT1. Interacts with PIM1; translocating SNX6 to the nucleus. In terms of processing, in vitro phosphorylated by PIM1; not affecting PIM1-dependent nuclear translocation.

Its subcellular location is the early endosome. The protein localises to the early endosome membrane. It localises to the cytoplasmic vesicle. It is found in the cytoplasm. The protein resides in the nucleus. Its function is as follows. Involved in several stages of intracellular trafficking. Interacts with membranes phosphatidylinositol 3,4-bisphosphate and/or phosphatidylinositol 4,5-bisphosphate. Acts in part as component of the retromer membrane-deforming SNX-BAR subcomplex. The SNX-BAR retromer mediates retrograde transport of cargo proteins from endosomes to the trans-Golgi network (TGN) and is involved in endosome-to-plasma membrane transport for cargo protein recycling. The SNX-BAR subcomplex functions to deform the donor membrane into a tubular profile called endosome-to-TGN transport carrier (ETC). Does not have in vitro vesicle-to-membrane remodeling activity. Involved in retrograde endosome-to-TGN transport of lysosomal enzyme receptor IGF2R. May function as link between transport vesicles and dynactin. Negatively regulates retrograde transport of BACE1 from the cell surface to the trans-Golgi network. Involved in E-cadherin sorting and degradation; inhibits PIP5K1C isoform 3-mediated E-cadherin degradation. In association with GIT1 involved in EGFR degradation. Promotes lysosomal degradation of CDKN1B. May contribute to transcription regulation. This is Sorting nexin-6 (SNX6) from Homo sapiens (Human).